Here is a 254-residue protein sequence, read N- to C-terminus: Probable protein S-acyltransferase 15 (254 aa).

2 helical membrane-spanning segments follow: residues 1 to 21 and 28 to 48; these read MGFV…GLQS and ALLF…CVLV. In terms of domain architecture, DHHC spans 75–125; the sequence is RKCDKCFAYKPLRTHHCRVCRRCVLKMDHHCLWINNCVGYANYKAFFILVF. C105 (S-palmitoyl cysteine intermediate) is an active-site residue. 2 helical membrane-spanning segments follow: residues 119 to 139 and 164 to 184; these read AFFI…VLLV and IFMI…IYLI.

The protein belongs to the DHHC palmitoyltransferase family.

Its subcellular location is the endoplasmic reticulum membrane. It is found in the cytoplasmic vesicle membrane. It carries out the reaction L-cysteinyl-[protein] + hexadecanoyl-CoA = S-hexadecanoyl-L-cysteinyl-[protein] + CoA. Its function is as follows. Palmitoyl acyltransferase. This Arabidopsis thaliana (Mouse-ear cress) protein is Probable protein S-acyltransferase 15 (PAT15).